Reading from the N-terminus, the 351-residue chain is Beta-hexosaminidase (351 aa).

Residues aspartate 62, arginine 70, arginine 133, and 163-164 each bind substrate; that span reads KH. Histidine 176 serves as the catalytic Proton donor/acceptor. The Nucleophile role is filled by aspartate 248.

The protein belongs to the glycosyl hydrolase 3 family. NagZ subfamily. In terms of assembly, monomer.

The protein localises to the cytoplasm. The catalysed reaction is Hydrolysis of terminal non-reducing N-acetyl-D-hexosamine residues in N-acetyl-beta-D-hexosaminides.. The protein operates within cell wall biogenesis; peptidoglycan recycling. Functionally, plays a role in peptidoglycan recycling by cleaving the terminal beta-1,4-linked N-acetylglucosamine (GlcNAc) from peptide-linked peptidoglycan fragments, giving rise to free GlcNAc, anhydro-N-acetylmuramic acid and anhydro-N-acetylmuramic acid-linked peptides. This Haemophilus influenzae (strain ATCC 51907 / DSM 11121 / KW20 / Rd) protein is Beta-hexosaminidase.